The following is a 246-amino-acid chain: MSGHSKWANIKHKKEKMDAKKGRIFTKLTKDIIKAAKEGGGDPNTNSKLRDAIEKAKANNLPNENIQRAIKKGTGELGGANLEEVIYEGYGPSGTAIIVEALTDNKNRTAGEIRHIFDRHGGSLGAAGSVTWMFDKVGIIIVEKDNSIDEDELAMVAIDAGAQDFSAEDEEFEIITEPSNFQEVKEAIEKAGYKISEAEVTMLPKNTIQLSPEDYEKFEKLIDKLEENDDVQNVYHNVEIEDENDE.

Residues 1–21 (MSGHSKWANIKHKKEKMDAKK) are disordered.

The protein belongs to the TACO1 family.

The protein resides in the cytoplasm. The protein is Probable transcriptional regulatory protein Teth39_1009 of Thermoanaerobacter pseudethanolicus (strain ATCC 33223 / 39E) (Clostridium thermohydrosulfuricum).